Consider the following 487-residue polypeptide: Glutamate--tRNA ligase (487 aa).

A 'HIGH' region motif is present at residues 11 to 21 (PSPTGYPHLGN). Zn(2+) contacts are provided by cysteine 108, cysteine 110, cysteine 135, and aspartate 137. A 'KMSKS' region motif is present at residues 245 to 249 (KLSKR). Position 248 (lysine 248) interacts with ATP.

It belongs to the class-I aminoacyl-tRNA synthetase family. Glutamate--tRNA ligase type 1 subfamily. In terms of assembly, monomer. The cofactor is Zn(2+).

It localises to the cytoplasm. The catalysed reaction is tRNA(Glu) + L-glutamate + ATP = L-glutamyl-tRNA(Glu) + AMP + diphosphate. Functionally, catalyzes the attachment of glutamate to tRNA(Glu) in a two-step reaction: glutamate is first activated by ATP to form Glu-AMP and then transferred to the acceptor end of tRNA(Glu). In Dehalococcoides mccartyi (strain CBDB1), this protein is Glutamate--tRNA ligase.